The sequence spans 635 residues: Threonine--tRNA ligase (635 aa).

Residues 1-61 (MVSIRLPDGS…DRDASLAIVT (61 aa)) enclose the TGS domain. The interval 242–533 (DHRKLGKQLD…LIEHHAGAMP (292 aa)) is catalytic. Zn(2+) contacts are provided by Cys-333, His-384, and His-510.

This sequence belongs to the class-II aminoacyl-tRNA synthetase family. Homodimer. Zn(2+) is required as a cofactor.

It is found in the cytoplasm. The catalysed reaction is tRNA(Thr) + L-threonine + ATP = L-threonyl-tRNA(Thr) + AMP + diphosphate + H(+). Its function is as follows. Catalyzes the attachment of threonine to tRNA(Thr) in a two-step reaction: L-threonine is first activated by ATP to form Thr-AMP and then transferred to the acceptor end of tRNA(Thr). Also edits incorrectly charged L-seryl-tRNA(Thr). This is Threonine--tRNA ligase from Burkholderia lata (strain ATCC 17760 / DSM 23089 / LMG 22485 / NCIMB 9086 / R18194 / 383).